Here is a 375-residue protein sequence, read N- to C-terminus: Phosphoglycerate kinase (375 aa).

The (2R)-3-phosphoglycerate site is built by Val-1, Asp-2, Phe-3, Asn-4, Arg-17, Ser-40, His-41, Gly-43, Arg-44, Leu-99, Arg-100, His-147, and Arg-148. Gly-191 lines the ADP pocket. Gly-191 contributes to the CDP binding site. The AMP site is built by Ala-192 and Lys-193. An ATP-binding site is contributed by Ala-192. Mg(2+) is bound at residue Ala-192. A CDP-binding site is contributed by Asp-196. Asp-196 is a binding site for Mg(2+). Position 197 (Lys-197) interacts with AMP. Position 197 (Lys-197) interacts with ATP. Gly-215 contacts ADP. Gly-215 contributes to the CDP binding site. Positions 216 and 290 each coordinate AMP. ATP contacts are provided by Gly-216 and Gly-290. CDP is bound by residues Gly-315 and Phe-320. ADP is bound at residue Phe-320. Glu-321 serves as a coordination point for AMP. Positions 321, 352, and 353 each coordinate ATP. Residue Asp-352 coordinates Mg(2+).

It belongs to the phosphoglycerate kinase family. Monomer. Requires Mg(2+) as cofactor.

It carries out the reaction (2R)-3-phosphoglycerate + ATP = (2R)-3-phospho-glyceroyl phosphate + ADP. Its pathway is carbohydrate degradation; glycolysis; pyruvate from D-glyceraldehyde 3-phosphate: step 2/5. This chain is Phosphoglycerate kinase (PGK), found in Tetrahymena pyriformis.